Reading from the N-terminus, the 394-residue chain is Phosphopentomutase (394 aa).

The Mn(2+) site is built by aspartate 15, aspartate 288, histidine 293, aspartate 329, histidine 330, and histidine 341.

This sequence belongs to the phosphopentomutase family. Requires Mn(2+) as cofactor.

It is found in the cytoplasm. The catalysed reaction is 2-deoxy-alpha-D-ribose 1-phosphate = 2-deoxy-D-ribose 5-phosphate. It catalyses the reaction alpha-D-ribose 1-phosphate = D-ribose 5-phosphate. It functions in the pathway carbohydrate degradation; 2-deoxy-D-ribose 1-phosphate degradation; D-glyceraldehyde 3-phosphate and acetaldehyde from 2-deoxy-alpha-D-ribose 1-phosphate: step 1/2. In terms of biological role, isomerase that catalyzes the conversion of deoxy-ribose 1-phosphate (dRib-1-P) and ribose 1-phosphate (Rib-1-P) to deoxy-ribose 5-phosphate (dRib-5-P) and ribose 5-phosphate (Rib-5-P), respectively. In Bacillus licheniformis (strain ATCC 14580 / DSM 13 / JCM 2505 / CCUG 7422 / NBRC 12200 / NCIMB 9375 / NCTC 10341 / NRRL NRS-1264 / Gibson 46), this protein is Phosphopentomutase.